Consider the following 300-residue polypeptide: Ribosomal protein L11 methyltransferase (300 aa).

Residues threonine 147, glycine 168, aspartate 190, and asparagine 236 each coordinate S-adenosyl-L-methionine.

This sequence belongs to the methyltransferase superfamily. PrmA family.

The protein localises to the cytoplasm. It carries out the reaction L-lysyl-[protein] + 3 S-adenosyl-L-methionine = N(6),N(6),N(6)-trimethyl-L-lysyl-[protein] + 3 S-adenosyl-L-homocysteine + 3 H(+). Functionally, methylates ribosomal protein L11. The protein is Ribosomal protein L11 methyltransferase of Leptospira interrogans serogroup Icterohaemorrhagiae serovar Lai (strain 56601).